Consider the following 404-residue polypeptide: Probable homogentisate phytyltransferase 1, chloroplastic (404 aa).

The transit peptide at 1–77 (MDSLRLRPSL…SHHRIPHRPT (77 aa)) directs the protein to the chloroplast. The tract at residues 68-96 (SHHRIPHRPTSSSADASGQPLQSSAEAHD) is disordered. Over residues 76–92 (PTSSSADASGQPLQSSA) the composition is skewed to polar residues. 9 helical membrane passes run 119–139 (TVIG…ENLS), 144–164 (LFLT…IYIV), 184–204 (LASG…FAAM), 216–238 (PLFL…LPFL), 245–265 (VVAA…AFFL), 282–302 (LIFA…FKDI), 325–345 (VFWI…LMGA), 348–368 (ACLW…AILW), and 382–402 (ITSF…LIPL).

This sequence belongs to the UbiA prenyltransferase family.

It localises to the plastid. The protein localises to the chloroplast thylakoid membrane. The catalysed reaction is phytyl diphosphate + homogentisate + H(+) = 2-methyl-6-phytyl-1,4-benzene-1,4-diol + CO2 + diphosphate. Its pathway is cofactor biosynthesis; tocopherol biosynthesis. In terms of biological role, involved in the synthesis of tocopherol (vitamin E). Catalyzes the condensation of homogentisate and phytyl diphosphate to form dimethylphytylhydroquinone. The polypeptide is Probable homogentisate phytyltransferase 1, chloroplastic (HPT1) (Oryza sativa subsp. japonica (Rice)).